The sequence spans 1099 residues: Solute carrier family 12 member 1 (1099 aa).

The Cytoplasmic segment spans residues 1-177 (MSLNNSSSVF…EDNKAGAVKF (177 aa)). The RFXV motif signature appears at 20–23 (RFQV). Serine 60 and serine 90 each carry phosphoserine. Threonine 94, threonine 99, threonine 104, and threonine 117 each carry phosphothreonine. Serine 119 is modified (phosphoserine). Serine 129 is modified (phosphoserine; by AMPK). Serine 147 is modified (phosphoserine). The tract at residues 147 to 169 (SADRVANGEGMPGEEHAENKEED) is disordered. Residues 159–169 (GEEHAENKEED) show a composition bias toward basic and acidic residues. The chain crosses the membrane as a helical span at residues 178-198 (GWVKGVLVRCMLNIWGVMLFI). Over 199–201 (RLS) the chain is Extracellular. The chain crosses the membrane as a helical span at residues 202–222 (WIVGEAGIGLGVVIILLSTMV). Residues 223 to 259 (TSITGLSTSAIATNGFVRGGGAYYLISRSLGPEFGGS) are Cytoplasmic-facing. Residues 260–280 (IGLIFAFANAVAVAMYVVGFA) traverse the membrane as a helical segment. Residues 281-302 (ETVVDLLKESDSMMVDPTNDIR) lie on the Extracellular side of the membrane. A helical membrane pass occupies residues 303–323 (IIGSITVVILLGISVAGMEWE). Residues 324–327 (AKAQ) are Cytoplasmic-facing. The helical transmembrane segment at 328-348 (VILLIILLIAIANFFIGTVIP) threads the bilayer. The Extracellular portion of the chain corresponds to 349 to 379 (SNNEKKSRGFFNYQASIFAENFGPSFTKGEG). Residues 380–400 (FFSVFAIFFPAATGILAGANI) traverse the membrane as a helical segment. At 401 to 417 (SGDLEDPQDAIPRGTML) the chain is on the cytoplasmic side. The helical transmembrane segment at 418–438 (AIFITTVAYIGVAICVGACVV) threads the bilayer. Topologically, residues 439–550 (RDATGSMNDT…NNEPLRGYIL (112 aa)) are extracellular. Asparagine 446 and asparagine 456 each carry an N-linked (GlcNAc...) asparagine glycan. The next 2 helical transmembrane spans lie at 551-571 (TFVI…APII) and 572-592 (SNFF…ASYA). Over 593 to 609 (KSPGWRPAYGIYNMWVS) the chain is Extracellular. The helical transmembrane segment at 610 to 630 (LFGAVLCCAVMFVINWWAAVI) threads the bilayer. Topologically, residues 631–1099 (TYVIEFFLYI…NHKNVLTFYS (469 aa)) are cytoplasmic.

This sequence belongs to the SLC12A transporter family. In terms of assembly, when phosphorylated, interacts with PPP3CB. Post-translationally, phosphorylated at Ser-90, Thr-99 and Thr-104 by OXSR1/OSR1 and STK39/SPAK downstream of WNK kinases (WNK1, WNK2, WNK3 or WNK4), promoting its activity. As to expression, predominant in kidney. The 3 isoforms are differentially distributed within the kidney: B almost exclusively in cortex, F almost exclusively in medulla, and A about equally distributed.

Its subcellular location is the apical cell membrane. The enzyme catalyses K(+)(out) + 2 chloride(out) + Na(+)(out) = K(+)(in) + 2 chloride(in) + Na(+)(in). With respect to regulation, activated following phosphorylation by OXSR1/OSR1 and STK39/SPAK downstream of WNK kinases (WNK1, WNK2, WNK3 or WNK4). Its function is as follows. Renal sodium, potassium and chloride ion cotransporter that mediates the transepithelial NaCl reabsorption in the thick ascending limb and plays an essential role in the urinary concentration and volume regulation. Electrically silent transporter system. This Oryctolagus cuniculus (Rabbit) protein is Solute carrier family 12 member 1 (SLC12A1).